The following is a 345-amino-acid chain: S-adenosylmethionine:tRNA ribosyltransferase-isomerase (345 aa).

This sequence belongs to the QueA family. In terms of assembly, monomer.

It is found in the cytoplasm. It catalyses the reaction 7-aminomethyl-7-carbaguanosine(34) in tRNA + S-adenosyl-L-methionine = epoxyqueuosine(34) in tRNA + adenine + L-methionine + 2 H(+). Its pathway is tRNA modification; tRNA-queuosine biosynthesis. Functionally, transfers and isomerizes the ribose moiety from AdoMet to the 7-aminomethyl group of 7-deazaguanine (preQ1-tRNA) to give epoxyqueuosine (oQ-tRNA). This Shewanella pealeana (strain ATCC 700345 / ANG-SQ1) protein is S-adenosylmethionine:tRNA ribosyltransferase-isomerase.